The sequence spans 221 residues: 2-phospho-L-lactate guanylyltransferase (221 aa).

It belongs to the CofC family. In terms of assembly, homodimer.

The enzyme catalyses (2S)-2-phospholactate + GTP + H(+) = (2S)-lactyl-2-diphospho-5'-guanosine + diphosphate. It functions in the pathway cofactor biosynthesis; coenzyme F420 biosynthesis. Functionally, guanylyltransferase that catalyzes the activation of (2S)-2-phospholactate (2-PL) as (2S)-lactyl-2-diphospho-5'-guanosine, via the condensation of 2-PL with GTP. It is involved in the biosynthesis of coenzyme F420, a hydride carrier cofactor. This Methanothrix thermoacetophila (strain DSM 6194 / JCM 14653 / NBRC 101360 / PT) (Methanosaeta thermophila) protein is 2-phospho-L-lactate guanylyltransferase.